Reading from the N-terminus, the 360-residue chain is POU domain, class 5, transcription factor 1 (360 aa).

Disordered stretches follow at residues 1 to 51 (MAGH…GPGV) and 88 to 114 (GGLE…SPEP). The 9aaTAD signature appears at 4-12 (HLTSDFAFS). Position 111 is a phosphoserine; by MAPK (Ser111). A Glycyl lysine isopeptide (Lys-Gly) (interchain with G-Cter in SUMO) cross-link involves residue Lys123. In terms of domain architecture, POU-specific spans 138–212 (DIKALQKELE…LLQKWVEEAD (75 aa)). Residues Arg157 and Gln164 each contribute to the DNA site. 2 DNA-binding regions span residues 180–186 (SQTTICR) and 193–196 (SFKN). A DNA-binding region (homeobox) is located at residues 230 to 289 (RKRKRTSIENRVRGNLENLFLQCPKPTLQQISHIAQQLGLEKDVVRVWFCNRRQKGKRSS). Position 235 is a phosphothreonine (Thr235). Phosphoserine occurs at positions 236, 289, 290, and 355.

Belongs to the POU transcription factor family. Class-5 subfamily. Interacts with PKM. Interacts with WWP2. Interacts with UBE2I and ZSCAN10. Interacts with PCGF1. Interacts with ESRRB; recruits ESRRB near the POU5F1-SOX2 element in the NANOG proximal promoter; the interaction is DNA independent. Interacts with ZNF322. Interacts with MAPK8 and MAPK9; the interaction allows MAPK8 and MAPK9 to phosphorylate POU5F1 on Ser-355. Interacts (when phosphorylated on Ser-355) with FBXW8. Interacts with FBXW4. Interacts with SOX2 and SOX15; binds synergistically with either SOX2 or SOX15 to DNA. Interacts with DDX56. In terms of processing, sumoylation enhances the protein stability, DNA binding and transactivation activity. Sumoylation is required for enhanced YES1 expression. Ubiquitinated; undergoes 'Lys-63'-linked polyubiquitination by WWP2 leading to proteasomal degradation. Post-translationally, ERK1/2-mediated phosphorylation at Ser-111 promotes nuclear exclusion and proteasomal degradation. Phosphorylation at Thr-235 and Ser-236 decrease DNA-binding and alters ability to activate transcription.

Its subcellular location is the cytoplasm. It is found in the nucleus. In terms of biological role, transcription factor that binds to the octamer motif (5'-ATTTGCAT-3'). Forms a trimeric complex with SOX2 or SOX15 on DNA and controls the expression of a number of genes involved in embryonic development such as YES1, FGF4, UTF1 and ZFP206. Critical for early embryogenesis and for embryonic stem cell pluripotency. The sequence is that of POU domain, class 5, transcription factor 1 (POU5F1) from Pan troglodytes (Chimpanzee).